The primary structure comprises 304 residues: N-acetyl-D-glucosamine kinase (304 aa).

ATP-binding positions include 4–11 (GFDIGGTK) and 133–140 (GFGGGLIF). 4 residues coordinate Zn(2+): histidine 157, cysteine 178, cysteine 180, and cysteine 185.

The protein belongs to the ROK (NagC/XylR) family. NagK subfamily.

It catalyses the reaction N-acetyl-D-glucosamine + ATP = N-acetyl-D-glucosamine 6-phosphate + ADP + H(+). The protein operates within cell wall biogenesis; peptidoglycan recycling. Its function is as follows. Catalyzes the phosphorylation of N-acetyl-D-glucosamine (GlcNAc) derived from cell-wall degradation, yielding GlcNAc-6-P. The protein is N-acetyl-D-glucosamine kinase of Pasteurella multocida (strain Pm70).